The chain runs to 212 residues: Urease accessory protein UreG (212 aa).

Gly11–Thr18 contributes to the GTP binding site.

It belongs to the SIMIBI class G3E GTPase family. UreG subfamily. Homodimer. UreD, UreF and UreG form a complex that acts as a GTP-hydrolysis-dependent molecular chaperone, activating the urease apoprotein by helping to assemble the nickel containing metallocenter of UreC. The UreE protein probably delivers the nickel.

It is found in the cytoplasm. In terms of biological role, facilitates the functional incorporation of the urease nickel metallocenter. This process requires GTP hydrolysis, probably effectuated by UreG. The polypeptide is Urease accessory protein UreG (Trichodesmium erythraeum (strain IMS101)).